The following is a 498-amino-acid chain: ATP synthase subunit beta, chloroplastic (498 aa).

172–179 (GGAGVGKT) is an ATP binding site.

Belongs to the ATPase alpha/beta chains family. As to quaternary structure, F-type ATPases have 2 components, CF(1) - the catalytic core - and CF(0) - the membrane proton channel. CF(1) has five subunits: alpha(3), beta(3), gamma(1), delta(1), epsilon(1). CF(0) has four main subunits: a(1), b(1), b'(1) and c(9-12).

The protein localises to the plastid. It localises to the chloroplast thylakoid membrane. It carries out the reaction ATP + H2O + 4 H(+)(in) = ADP + phosphate + 5 H(+)(out). Its function is as follows. Produces ATP from ADP in the presence of a proton gradient across the membrane. The catalytic sites are hosted primarily by the beta subunits. This chain is ATP synthase subunit beta, chloroplastic, found in Nicotiana tomentosiformis (Tobacco).